The chain runs to 285 residues: Sulfotransferase 2A6 (285 aa).

A 3'-phosphoadenylyl sulfate-binding site is contributed by 44 to 49 (KSGTNW). The active-site Proton acceptor is His99. 3'-phosphoadenylyl sulfate contacts are provided by residues Arg121, Ser129, Tyr184, 218 to 223 (SSFQAM), and 247 to 249 (RKG).

This sequence belongs to the sulfotransferase 1 family. As to quaternary structure, oligomer.

The protein resides in the cytoplasm. The protein localises to the cytosol. It catalyses the reaction an alcohol + 3'-phosphoadenylyl sulfate = an alkyl sulfate + adenosine 3',5'-bisphosphate + H(+). The enzyme catalyses glycolithocholate + 3'-phosphoadenylyl sulfate = sulfoglycolithocholate + adenosine 3',5'-bisphosphate + H(+). The catalysed reaction is taurolithocholate + 3'-phosphoadenylyl sulfate = taurolithocholate 3-sulfate + adenosine 3',5'-bisphosphate + H(+). It carries out the reaction 3beta-hydroxyandrost-5-en-17-one + 3'-phosphoadenylyl sulfate = dehydroepiandrosterone 3-sulfate + adenosine 3',5'-bisphosphate + H(+). In terms of biological role, sulfotransferase that utilizes 3'-phospho-5'-adenylyl sulfate (PAPS) as sulfonate donor to catalyze the sulfonation of the hydroxyl group of hydroxysteroids and bile acids. The sequence is that of Sulfotransferase 2A6 from Mus musculus (Mouse).